A 510-amino-acid polypeptide reads, in one-letter code: NAD(P)H-quinone oxidoreductase subunit 2 B, chloroplastic (510 aa).

Transmembrane regions (helical) follow at residues leucine 24–leucine 44, isoleucine 57–phenylalanine 77, isoleucine 99–isoleucine 119, methionine 124–cysteine 144, leucine 149–tyrosine 169, tyrosine 183–glycine 203, proline 227–alanine 247, tryptophan 295–isoleucine 315, methionine 323–aspartate 343, tyrosine 354–leucine 374, alanine 392–alanine 412, leucine 418–leucine 438, and leucine 482–isoleucine 502.

It belongs to the complex I subunit 2 family. In terms of assembly, NDH is composed of at least 16 different subunits, 5 of which are encoded in the nucleus.

The protein localises to the plastid. The protein resides in the chloroplast thylakoid membrane. The catalysed reaction is a plastoquinone + NADH + (n+1) H(+)(in) = a plastoquinol + NAD(+) + n H(+)(out). The enzyme catalyses a plastoquinone + NADPH + (n+1) H(+)(in) = a plastoquinol + NADP(+) + n H(+)(out). Its function is as follows. NDH shuttles electrons from NAD(P)H:plastoquinone, via FMN and iron-sulfur (Fe-S) centers, to quinones in the photosynthetic chain and possibly in a chloroplast respiratory chain. The immediate electron acceptor for the enzyme in this species is believed to be plastoquinone. Couples the redox reaction to proton translocation, and thus conserves the redox energy in a proton gradient. This is NAD(P)H-quinone oxidoreductase subunit 2 B, chloroplastic from Morus indica (Mulberry).